Consider the following 69-residue polypeptide: uncharacterized protein (69 aa).

Disordered stretches follow at residues 1 to 32 and 44 to 69; these read MSAPYKNLDRDTKHTHPKLNETERNLNRGWGD and QSDADKQLAEDKMETKYEKSKPAPSD. Composition is skewed to basic and acidic residues over residues 7–32 and 46–69; these read NLDRDTKHTHPKLNETERNLNRGWGD and DADKQLAEDKMETKYEKSKPAPSD.

This is an uncharacterized protein from Schizosaccharomyces pombe (strain 972 / ATCC 24843) (Fission yeast).